We begin with the raw amino-acid sequence, 380 residues long: MRLHEYQAKQIFSKHGIRVARGELATSVEDVRGIAEELGGKVVLKSQVLVGGRGKAGGIKKAYSVEEAVEKAKEMFGSVLKGHIVEKIYVEEMIEVQREMYAGLTIDRANKGIAAILSSVGGMDIEEIAVKHPEKIARIAVNPKWGLWDYQIRELLLNSQMPREYWKEVASILKTLYRIMVHYEAELVEINPLVVTPDGLVAADARLNIDDSALFRHRDLEKLRDYTEADQMERIAMEKGLNYVKLDGNVGVLANGAGMAMATMDLIYIYGGKPANFLDIGGGASAEVVREAINLILSDKNVKVVFINIFGGITRCDEVAKGLKEALADVSTPVVVRLAGTNEEEGRKIMDEFAKDRPNFHIVETMEEGAEKAVKLAEEV.

The region spanning 9–235 (KQIFSKHGIR…YTEADQMERI (227 aa)) is the ATP-grasp domain. ATP contacts are provided by residues K45, 52 to 54 (GRG), E91, I94, and E99. N191 and D204 together coordinate Mg(2+). Residues N255 and 312–314 (GIT) contribute to the substrate site.

The protein belongs to the succinate/malate CoA ligase beta subunit family. Heterotetramer of two alpha and two beta subunits. The cofactor is Mg(2+).

It catalyses the reaction succinate + ATP + CoA = succinyl-CoA + ADP + phosphate. The enzyme catalyses GTP + succinate + CoA = succinyl-CoA + GDP + phosphate. The protein operates within carbohydrate metabolism; tricarboxylic acid cycle; succinate from succinyl-CoA (ligase route): step 1/1. Its function is as follows. Succinyl-CoA synthetase functions in the citric acid cycle (TCA), coupling the hydrolysis of succinyl-CoA to the synthesis of either ATP or GTP and thus represents the only step of substrate-level phosphorylation in the TCA. The beta subunit provides nucleotide specificity of the enzyme and binds the substrate succinate, while the binding sites for coenzyme A and phosphate are found in the alpha subunit. The chain is Succinate--CoA ligase [ADP-forming] subunit beta 2 from Archaeoglobus fulgidus (strain ATCC 49558 / DSM 4304 / JCM 9628 / NBRC 100126 / VC-16).